The primary structure comprises 342 residues: Fatty acid desaturase 6 (342 aa).

2 helical membrane-spanning segments follow: residues 39–59 (GVDCAILALSLLALPAGFLCL) and 63–83 (NILAFATGITILGVCHYTLTV). Residues 87-91 (HLATH) carry the Histidine box-1 motif. A helical transmembrane segment spans residues 100 to 120 (WSKILMIFFLEVCTAFSAEFA). The short motif at 124–128 (HVNLH) is the Histidine box-2 element. Transmembrane regions (helical) follow at residues 151 to 171 (YVYMFLGPLLVPIITPLVALE) and 185 to 205 (LGFICLGLYSQYWLFMNVSGF). A Histidine box-3 motif is present at residues 277–281 (HVEHH).

It belongs to the fatty acid desaturase type 1 family.

The protein resides in the membrane. It functions in the pathway lipid metabolism; fatty acid metabolism. The chain is Fatty acid desaturase 6 (Fads6) from Mus musculus (Mouse).